The following is a 229-amino-acid chain: Non-structural protein P8 (229 aa).

The span at 13–31 (KMKHNQDRVEEPSQVRVDD) shows a compositional bias: basic and acidic residues. The segment at 13 to 46 (KMKHNQDRVEEPSQVRVDDTISQPPRYAPSAPMP) is disordered. Positions 36-46 (PPRYAPSAPMP) are enriched in low complexity. Transmembrane regions (helical) follow at residues 119–139 (IIHT…VCTL) and 162–182 (SLNP…MVCA).

It belongs to the orbivirus NS3 family. Forms homooligomers via coiled-coil motif. Interacts with host OPTN; this interaction inhibits innate immune response.

It localises to the host cell membrane. It is found in the host Golgi apparatus. Plays a role in the inhibition of host innate immune response. Interacts with host OPTN and thus inhibits the recruitment of TBK1 to the host Golgi apparatus. In turn, downstream partner IRF3 cannot be activated and IFN-beta production is impaired. Functionally, facilitates viral particle release either by increasing plasma membrane permeability through a viroporin-like activity or by viral budding. In Antilocapra americana (Pronghorn), this protein is Non-structural protein P8 (Segment-10).